Reading from the N-terminus, the 264-residue chain is Triosephosphate isomerase (264 aa).

12–14 (NWK) contacts substrate. His-104 serves as the catalytic Electrophile. The active-site Proton acceptor is Glu-176. Substrate-binding positions include Gly-182, Ser-222, and 243 to 244 (GG).

It belongs to the triosephosphate isomerase family. Homodimer.

It is found in the cytoplasm. It carries out the reaction D-glyceraldehyde 3-phosphate = dihydroxyacetone phosphate. The protein operates within carbohydrate biosynthesis; gluconeogenesis. Its pathway is carbohydrate degradation; glycolysis; D-glyceraldehyde 3-phosphate from glycerone phosphate: step 1/1. Functionally, involved in the gluconeogenesis. Catalyzes stereospecifically the conversion of dihydroxyacetone phosphate (DHAP) to D-glyceraldehyde-3-phosphate (G3P). The protein is Triosephosphate isomerase of Bifidobacterium adolescentis (strain ATCC 15703 / DSM 20083 / NCTC 11814 / E194a).